Consider the following 121-residue polypeptide: Protein MGF 110-5L (121 aa).

Residues 1 to 20 form the signal peptide; sequence MLVIFLGILGLLANQVSSQL. N-linked (GlcNAc...) asparagine; by host glycosylation is found at Asn-62 and Asn-116.

Belongs to the asfivirus MGF 110 family.

The polypeptide is Protein MGF 110-5L (African swine fever virus (isolate Portugal/Lis 57/1957) (ASFV)).